A 297-amino-acid chain; its full sequence is SH2 domain-containing protein 6 (297 aa).

2 disordered regions span residues 1 to 61 and 74 to 93; these read MSCP…FPTR and MNPQ…RGTS. The span at 36-45 shows a compositional bias: pro residues; the sequence is PSKPPLPPPQ. Positions 187-295 constitute an SH2 domain; it reads WYSGNCDRQS…RGLTYLRFPT (109 aa).

The sequence is that of SH2 domain-containing protein 6 (Sh2d6) from Mus musculus (Mouse).